A 154-amino-acid polypeptide reads, in one-letter code: Catabolic 3-dehydroquinase (154 aa).

Tyrosine 25 functions as the Proton acceptor in the catalytic mechanism. Residues asparagine 79, histidine 85, and aspartate 92 each coordinate substrate. Catalysis depends on histidine 105, which acts as the Proton donor. Substrate-binding positions include 106-107 (IS) and arginine 116.

It belongs to the type-II 3-dehydroquinase family. Homododecamer. Adopts a ring-like structure, composed of an arrangement of two hexameric rings stacked on top of one another.

The enzyme catalyses 3-dehydroquinate = 3-dehydroshikimate + H2O. It participates in aromatic compound metabolism; 3,4-dihydroxybenzoate biosynthesis; 3,4-dihydroxybenzoate from 3-dehydroquinate: step 1/2. Functionally, is involved in the catabolism of quinate. Allows the utilization of quinate as carbon source via the beta-ketoadipate pathway. This is Catabolic 3-dehydroquinase from Botryotinia fuckeliana (strain B05.10) (Noble rot fungus).